The following is a 635-amino-acid chain: Probable extracellular metalloproteinase 1 (635 aa).

The first 19 residues, 1–19 (MHGLLLAAGLLSLPLHVLA), serve as a signal peptide directing secretion. Residues 20–246 (HPQPSTSTSL…VHNVVDYVAH (227 aa)) constitute a propeptide that is removed on maturation. Asn-287 carries N-linked (GlcNAc...) asparagine glycosylation. Zn(2+) is bound at residue His-430. Residue Glu-431 is part of the active site. Zn(2+) is bound at residue His-434. N-linked (GlcNAc...) asparagine glycans are attached at residues Asn-475, Asn-594, and Asn-623.

The protein belongs to the peptidase M36 family. Requires Zn(2+) as cofactor.

It localises to the secreted. Its function is as follows. Secreted metalloproteinase probably acting as a virulence factor. This is Probable extracellular metalloproteinase 1 (MEP1) from Arthroderma benhamiae (strain ATCC MYA-4681 / CBS 112371) (Trichophyton mentagrophytes).